Reading from the N-terminus, the 473-residue chain is Ribulose bisphosphate carboxylase large chain (473 aa).

Asn-116 and Thr-166 together coordinate substrate. Residue Lys-168 is the Proton acceptor of the active site. Lys-170 is a substrate binding site. Mg(2+)-binding residues include Lys-194, Asp-196, and Glu-197. An N6-carboxylysine modification is found at Lys-194. Residue His-287 is the Proton acceptor of the active site. Substrate-binding residues include Arg-288, His-320, and Ser-372.

This sequence belongs to the RuBisCO large chain family. Type I subfamily. As to quaternary structure, heterohexadecamer of 8 large chains and 8 small chains. Mg(2+) serves as cofactor.

The enzyme catalyses 2 (2R)-3-phosphoglycerate + 2 H(+) = D-ribulose 1,5-bisphosphate + CO2 + H2O. It carries out the reaction D-ribulose 1,5-bisphosphate + O2 = 2-phosphoglycolate + (2R)-3-phosphoglycerate + 2 H(+). RuBisCO catalyzes two reactions: the carboxylation of D-ribulose 1,5-bisphosphate, the primary event in carbon dioxide fixation, as well as the oxidative fragmentation of the pentose substrate. Both reactions occur simultaneously and in competition at the same active site. This Rhodobacter capsulatus (strain ATCC BAA-309 / NBRC 16581 / SB1003) protein is Ribulose bisphosphate carboxylase large chain.